Consider the following 507-residue polypeptide: Arylsulfatase A (507 aa).

An N-terminal signal peptide occupies residues 1-18; that stretch reads MEALWTLTLALAAGLAAA. Residues D29, D30, and C69 each contribute to the Ca(2+) site. Residue C69 is the Nucleophile of the active site. Residue C69 is modified to 3-oxoalanine (Cys). K123 is a substrate binding site. H125 is a catalytic residue. S150 provides a ligand contact to substrate. 2 cysteine pairs are disulfide-bonded: C156-C172 and C161-C168. Residue N158 is glycosylated (N-linked (GlcNAc...) asparagine). N184 is a glycosylation site (N-linked (GlcNAc...) asparagine). H229 is a substrate binding site. 2 residues coordinate Ca(2+): D281 and N282. 4 disulfides stabilise this stretch: C300/C414, C488/C500, C489/C502, and C493/C499. Substrate is bound at residue K302. Residue N350 is glycosylated (N-linked (GlcNAc...) asparagine).

This sequence belongs to the sulfatase family. In terms of assembly, homodimer at neutral pH and homooctamer at acidic pH. Exists both as a single chain of 58 kDa (component A) or as a chain of 50 kDa (component B) linked by disulfide bond(s) to a 7 kDa chain (component C). Interacts with SUMF1. Requires Ca(2+) as cofactor. The conversion to 3-oxoalanine (also known as C-formylglycine, FGly), of a serine or cysteine residue in prokaryotes and of a cysteine residue in eukaryotes, is critical for catalytic activity. This post-translational modification is severely defective in multiple sulfatase deficiency (MSD).

Its subcellular location is the endoplasmic reticulum. It is found in the lysosome. The catalysed reaction is an N-acyl-1-beta-D-(3-O-sulfo)-galactosyl-sphing-4-enine + H2O = a beta-D-galactosyl-(1&lt;-&gt;1')-N-acylsphing-4-enine + sulfate + H(+). Functionally, hydrolyzes cerebroside sulfate. This is Arylsulfatase A (ARSA) from Bos taurus (Bovine).